Here is a 198-residue protein sequence, read N- to C-terminus: Holliday junction branch migration complex subunit RuvA (198 aa).

Residues 1 to 63 (MIALLTGQIA…EDAIQLYGFR (63 aa)) are domain I. The tract at residues 64 to 142 (TSLEKSFFQL…KLDLSSVVVP (79 aa)) is domain II. Positions 143 to 153 (EPRQMPEDDLL) are flexible linker. The segment at 153 to 198 (LEDVVSALLNLGYKEPQVRKVLAGLNPGSDASLEGVLKQALKSLMR) is domain III.

The protein belongs to the RuvA family. Homotetramer. Forms an RuvA(8)-RuvB(12)-Holliday junction (HJ) complex. HJ DNA is sandwiched between 2 RuvA tetramers; dsDNA enters through RuvA and exits via RuvB. An RuvB hexamer assembles on each DNA strand where it exits the tetramer. Each RuvB hexamer is contacted by two RuvA subunits (via domain III) on 2 adjacent RuvB subunits; this complex drives branch migration. In the full resolvosome a probable DNA-RuvA(4)-RuvB(12)-RuvC(2) complex forms which resolves the HJ.

The protein localises to the cytoplasm. Its function is as follows. The RuvA-RuvB-RuvC complex processes Holliday junction (HJ) DNA during genetic recombination and DNA repair, while the RuvA-RuvB complex plays an important role in the rescue of blocked DNA replication forks via replication fork reversal (RFR). RuvA specifically binds to HJ cruciform DNA, conferring on it an open structure. The RuvB hexamer acts as an ATP-dependent pump, pulling dsDNA into and through the RuvAB complex. HJ branch migration allows RuvC to scan DNA until it finds its consensus sequence, where it cleaves and resolves the cruciform DNA. The sequence is that of Holliday junction branch migration complex subunit RuvA from Pelobacter propionicus (strain DSM 2379 / NBRC 103807 / OttBd1).